Reading from the N-terminus, the 191-residue chain is Outer membrane lipoprotein DolP (191 aa).

A signal peptide spans 1-18 (MKALSPIAVLISALLLQG). C19 carries N-palmitoyl cysteine lipidation. A lipid anchor (S-diacylglycerol cysteine) is attached at C19. BON domains follow at residues 46-115 (DDGT…RQGQ) and 124-191 (NDTW…TFIK).

This sequence belongs to the lipoprotein DolP family.

It is found in the cell outer membrane. Its function is as follows. Plays an important role in maintaining outer membrane integrity. This chain is Outer membrane lipoprotein DolP, found in Escherichia coli O157:H7.